Reading from the N-terminus, the 956-residue chain is DNA ligase 4 (956 aa).

Residues glutamate 307, lysine 309, isoleucine 310, arginine 314, glutamate 371, phenylalanine 409, glutamate 476, lysine 481, lysine 498, and lysine 500 each contribute to the ATP site. Lysine 309 functions as the N6-AMP-lysine intermediate in the catalytic mechanism. Mg(2+) is bound at residue glutamate 371. Glutamate 476 serves as a coordination point for Mg(2+). The interval 666-700 (LEDRKRRNAGPGRGAKRLKLANVSSDEDELGTDER) is disordered. BRCT domains lie at 700-793 (RPTS…PRNL) and 857-956 (PKGM…DYPL).

It belongs to the ATP-dependent DNA ligase family. Requires Mg(2+) as cofactor.

The protein localises to the nucleus. It carries out the reaction ATP + (deoxyribonucleotide)n-3'-hydroxyl + 5'-phospho-(deoxyribonucleotide)m = (deoxyribonucleotide)n+m + AMP + diphosphate.. Its function is as follows. DNA ligase involved in DNA non-homologous end joining (NHEJ); required for double-strand break (DSB) repair. The sequence is that of DNA ligase 4 (LIG4) from Yarrowia lipolytica (strain CLIB 122 / E 150) (Yeast).